An 899-amino-acid polypeptide reads, in one-letter code: Protein translocase subunit SecA (899 aa).

ATP-binding positions include Gln-87, 105 to 109 (GEGKT), and Asp-512. Residues 846 to 899 (MEEEQQQQAQKKIVFNLGEEPATAPQPARSKKSASRNDPCPCGSGKKYKKCCGK) are disordered. Residues Cys-885, Cys-887, Cys-896, and Cys-897 each contribute to the Zn(2+) site.

Belongs to the SecA family. In terms of assembly, monomer and homodimer. Part of the essential Sec protein translocation apparatus which comprises SecA, SecYEG and auxiliary proteins SecDF-YajC and YidC. It depends on Zn(2+) as a cofactor.

It is found in the cell inner membrane. Its subcellular location is the cytoplasm. The catalysed reaction is ATP + H2O + cellular proteinSide 1 = ADP + phosphate + cellular proteinSide 2.. Functionally, part of the Sec protein translocase complex. Interacts with the SecYEG preprotein conducting channel. Has a central role in coupling the hydrolysis of ATP to the transfer of proteins into and across the cell membrane, serving as an ATP-driven molecular motor driving the stepwise translocation of polypeptide chains across the membrane. This chain is Protein translocase subunit SecA, found in Geobacter metallireducens (strain ATCC 53774 / DSM 7210 / GS-15).